The sequence spans 127 residues: Translation initiation factor 5A (127 aa).

Lys-35 is modified (hypusine).

It belongs to the eIF-5A family.

The protein resides in the cytoplasm. Functionally, functions by promoting the formation of the first peptide bond. The chain is Translation initiation factor 5A from Methanococcoides burtonii (strain DSM 6242 / NBRC 107633 / OCM 468 / ACE-M).